The primary structure comprises 437 residues: MHNTAVILAAGLGTRMKSSRPKVLHHIAGRPMLAHLLAACKTAFAATVVVTGPDMDEVARAAAPHPTVIQRERLGTAHAALAAADHFGAGAVTLVYGDNPLVTGPTLQRLGARLGAGDAALVLLGTRPPEPGAFGRIIGPAGFAERIVEFADATEAERAVGLCNVGGFSAAAADMRRWLGNIGNDNAKGEYYLTDLVAVARAEGASVAVVEAPWDECRGVNSRAELAAAEAAMQSRLRAAALAAGVTMTAPETVFLAADTALAADVTIEPHVVFGPGVTVGPDVTIRAFSHLEGCAISAGAIIGPYARLRPGSDIGAGAHVGNFVELKAARLGAGAKANHLTYLGDAEIGPRANIGAGTITCNYDGFAKHRTTIGADAFIGSDVALVAPVSVGDRAIIAAGSVITDPVAADALALARGRQVEKPGRAAELRMTKGKR.

The segment at 1–223 is pyrophosphorylase; that stretch reads MHNTAVILAA…WDECRGVNSR (223 aa). UDP-N-acetyl-alpha-D-glucosamine is bound by residues 8 to 11, lysine 22, glutamine 70, 75 to 76, 96 to 98, glycine 135, glutamate 149, asparagine 164, and asparagine 221; these read LAAG, GT, and YGD. Aspartate 98 serves as a coordination point for Mg(2+). Residue asparagine 221 participates in Mg(2+) binding. A linker region spans residues 224-244; that stretch reads AELAAAEAAMQSRLRAAALAA. The interval 245-437 is N-acetyltransferase; it reads GVTMTAPETV…AELRMTKGKR (193 aa). Residues arginine 310 and lysine 328 each contribute to the UDP-N-acetyl-alpha-D-glucosamine site. The active-site Proton acceptor is the histidine 340. Residues tyrosine 343 and asparagine 354 each coordinate UDP-N-acetyl-alpha-D-glucosamine. Acetyl-CoA-binding positions include alanine 357, 363–364, serine 382, alanine 400, and arginine 417; that span reads NY.

The protein in the N-terminal section; belongs to the N-acetylglucosamine-1-phosphate uridyltransferase family. In the C-terminal section; belongs to the transferase hexapeptide repeat family. As to quaternary structure, homotrimer. Mg(2+) serves as cofactor.

The protein localises to the cytoplasm. It carries out the reaction alpha-D-glucosamine 1-phosphate + acetyl-CoA = N-acetyl-alpha-D-glucosamine 1-phosphate + CoA + H(+). It catalyses the reaction N-acetyl-alpha-D-glucosamine 1-phosphate + UTP + H(+) = UDP-N-acetyl-alpha-D-glucosamine + diphosphate. It functions in the pathway nucleotide-sugar biosynthesis; UDP-N-acetyl-alpha-D-glucosamine biosynthesis; N-acetyl-alpha-D-glucosamine 1-phosphate from alpha-D-glucosamine 6-phosphate (route II): step 2/2. It participates in nucleotide-sugar biosynthesis; UDP-N-acetyl-alpha-D-glucosamine biosynthesis; UDP-N-acetyl-alpha-D-glucosamine from N-acetyl-alpha-D-glucosamine 1-phosphate: step 1/1. The protein operates within bacterial outer membrane biogenesis; LPS lipid A biosynthesis. Its function is as follows. Catalyzes the last two sequential reactions in the de novo biosynthetic pathway for UDP-N-acetylglucosamine (UDP-GlcNAc). The C-terminal domain catalyzes the transfer of acetyl group from acetyl coenzyme A to glucosamine-1-phosphate (GlcN-1-P) to produce N-acetylglucosamine-1-phosphate (GlcNAc-1-P), which is converted into UDP-GlcNAc by the transfer of uridine 5-monophosphate (from uridine 5-triphosphate), a reaction catalyzed by the N-terminal domain. This chain is Bifunctional protein GlmU, found in Acidiphilium cryptum (strain JF-5).